The sequence spans 168 residues: Group IIF secretory phospholipase A2 (168 aa).

An N-terminal signal peptide occupies residues methionine 1–serine 20. Intrachain disulfides connect cysteine 46/cysteine 138, cysteine 48/cysteine 64, cysteine 63/cysteine 120, cysteine 69/cysteine 145, cysteine 70/cysteine 113, cysteine 79/cysteine 106, and cysteine 98/cysteine 111. Ca(2+) contacts are provided by tyrosine 47, glycine 49, and glycine 51. Histidine 67 is a catalytic residue. Aspartate 68 is a binding site for Ca(2+). N-linked (GlcNAc...) asparagine glycosylation is found at asparagine 92 and asparagine 102. The active site involves aspartate 114. The interval glutamine 139–threonine 168 is required for localization on the plasma membrane. Residue asparagine 144 is glycosylated (N-linked (GlcNAc...) asparagine).

It belongs to the phospholipase A2 family. It depends on Ca(2+) as a cofactor. In terms of tissue distribution, strongly expressed in testis.

It localises to the secreted. The protein localises to the cell membrane. It carries out the reaction a 1,2-diacyl-sn-glycero-3-phosphocholine + H2O = a 1-acyl-sn-glycero-3-phosphocholine + a fatty acid + H(+). The catalysed reaction is 1-hexadecanoyl-2-(9Z-octadecenoyl)-sn-glycero-3-phospho-(1'-sn-glycerol) + H2O = 1-hexadecanoyl-sn-glycero-3-phospho-(1'-sn-glycerol) + (9Z)-octadecenoate + H(+). The enzyme catalyses 1-hexadecanoyl-2-(9Z,12Z-octadecadienoyl)-sn-glycero-3-phosphoethanolamine + H2O = 1-hexadecanoyl-sn-glycero-3-phosphoethanolamine + (9Z,12Z)-octadecadienoate + H(+). It catalyses the reaction 1-hexadecanoyl-2-(5Z,8Z,11Z,14Z-eicosatetraenoyl)-sn-glycero-3-phosphoethanolamine + H2O = 1-hexadecanoyl-sn-glycero-3-phosphoethanolamine + (5Z,8Z,11Z,14Z)-eicosatetraenoate + H(+). It carries out the reaction 1-hexadecanoyl-2-(9Z-octadecenoyl)-sn-glycero-3-phosphocholine + H2O = 1-hexadecanoyl-sn-glycero-3-phosphocholine + (9Z)-octadecenoate + H(+). The catalysed reaction is 1-hexadecanoyl-2-(9Z-octadecenoyl)-sn-glycero-3-phospho-L-serine + H2O = 1-hexadecanoyl-sn-glycero-3-phospho-L-serine + (9Z)-octadecenoate + H(+). Its function is as follows. Secretory calcium-dependent phospholipase A2 that primarily targets extracellular phospholipids. Hydrolyzes the ester bond of the fatty acyl group attached at the sn-2 position of phospholipids (phospholipase A2 activity), the catalytic efficiency decreasing in the following order: phosphatidylglycerols &gt; phosphatidylethanolamines &gt; phosphatidylcholines &gt; phosphatidylserines. May play a role in lipid mediator production in inflammatory conditions, by providing arachidonic acid to downstream cyclooxygenases and lipoxygenases. This is Group IIF secretory phospholipase A2 (Pla2g2f) from Mus musculus (Mouse).